We begin with the raw amino-acid sequence, 430 residues long: MKKRLTTSTCSSSPSSSVSSSTTTSSPIQSEAPRPKRAKRAKKSSPSGDKSHNPTSPASTRRSSIYRGVTRHRWTGRFEAHLWDKSSWNSIQNKKGKQVYLGAYDSEEAAAHTYDLAALKYWGPDTILNFPAETYTKELEEMQRVTKEEYLASLRRQSSGFSRGVSKYRGVARHHHNGRWEARIGRVFGNKYLYLGTYNTQEEAAAAYDMAAIEYRGANAVTNFDISNYIDRLKKKGVFPFPVNQANHQEGILVEAKQEVETREAKEEPREEVKQQYVEEPPQEEEEKEEEKAEQQEAEIVGYSEEAAVVNCCIDSSTIMEMDRCGDNNELAWNFCMMDTGFSPFLTDQNLANENPIEYPELFNELAFEDNIDFMFDDGKHECLNLENLDCCVVGRESPPSSSSPLSCLSTDSASSTTTTTTSVSCNYLV.

Low complexity predominate over residues 1–26 (MKKRLTTSTCSSSPSSSVSSSTTTSS). A disordered region spans residues 1–66 (MKKRLTTSTC…PASTRRSSIY (66 aa)). Polar residues predominate over residues 53 to 63 (NPTSPASTRRS). The AP2/ERF 1 DNA-binding region spans 65 to 131 (IYRGVTRHRW…WGPDTILNFP (67 aa)). Threonine 70 carries the post-translational modification Phosphothreonine; by KIN10. The residue at position 166 (serine 166) is a Phosphoserine; by KIN10. Residues 167–225 (KYRGVARHHHNGRWEARIGRVFGNKYLYLGTYNTQEEAAAAYDMAAIEYRGANAVTNFD) constitute a DNA-binding region (AP2/ERF 2). Basic and acidic residues predominate over residues 260-274 (VETREAKEEPREEVK). Disordered regions lie at residues 260–297 (VETREAKEEPREEVKQQYVEEPPQEEEEKEEEKAEQQE) and 398–422 (SPPSSSSPLSCLSTDSASSTTTTTT).

The protein belongs to the AP2/ERF transcription factor family. AP2 subfamily. As to quaternary structure, interacts with KIN10 and KIN11. Post-translationally, ubiquitinated. In terms of processing, the phosphorylation at Thr-70 and Ser-166 by KIN10 facilitates its degradation via the proteasomal pathway. As to expression, mostly expressed in siliques, especially in seeds. Also detected in roots and flowers, and, to a lower extent, in leaves stems and seedlings.

Its subcellular location is the nucleus. Its activity is regulated as follows. Down-regulated by KIN10 that controls its protein stability under a phosphorylation-dependent manner. In terms of biological role, may be involved in the regulation of gene expression by stress factors and by components of stress signal transduction pathways. Transcriptional activator involved in the activation of a subset of sugar-responsive genes and the control of carbon flow from sucrose import to oil accumulation in developing seeds. Binds to the GCC-box pathogenesis-related promoter element. Promotes sugar uptake and seed oil accumulation by glycolysis. Required for embryo development, seed germination and, indirectly, for seedling establishment. Negative regulator of the ABA-mediated germination inhibition. In Arabidopsis thaliana (Mouse-ear cress), this protein is Ethylene-responsive transcription factor WRI1 (WRI1).